Consider the following 252-residue polypeptide: Small ribosomal subunit protein uS2 (252 aa).

Residue Ser2 is modified to N-acetylserine. Low complexity predominate over residues 213 to 222 (QVAEETAGAA). The interval 213–252 (QVAEETAGAATEEEEAKEEVTEEQTEATEWAEETTEAVAW) is disordered. Residues 223-252 (TEEEEAKEEVTEEQTEATEWAEETTEAVAW) show a composition bias toward acidic residues.

The protein belongs to the universal ribosomal protein uS2 family. As to quaternary structure, component of the small ribosomal subunit. Mature ribosomes consist of a small (40S) and a large (60S) subunit. The 40S subunit contains about 33 different proteins and 1 molecule of RNA (18S). The 60S subunit contains about 49 different proteins and 3 molecules of RNA (25S, 5.8S and 5S). Interacts with RPS21.

Its subcellular location is the cytoplasm. Required for the assembly and/or stability of the 40S ribosomal subunit. Required for the processing of the 20S rRNA-precursor to mature 18S rRNA in a late step of the maturation of 40S ribosomal subunits. This Zygosaccharomyces rouxii (strain ATCC 2623 / CBS 732 / NBRC 1130 / NCYC 568 / NRRL Y-229) protein is Small ribosomal subunit protein uS2.